The chain runs to 395 residues: Protein maternal effect lethal 26 (395 aa).

The MATH domain maps to 41 to 162; sequence KVQHTWTVKN…RDMIIVNVEI (122 aa). The BTB domain occupies 201 to 269; sequence CDFAINVNGK…IYCGRCNKDI (69 aa).

As to quaternary structure, interacts (via BTB domain) with cul-3. Seems to be a component of a E3 ubiquitin-protein ligase complex containing cul-3. Interacts (probably via MATH domain) with mei-1, which targets mei-1 for ubiquitin-mediated proteolysis. Interacts (probably via MATH domain) with ppfr-1, the regulatory subunit of the PP4 complex; targets ppfr-1 for ubiquitin-mediated proteolysis. May interact (via MATH domain) with unc-89 (via Ig-like C2-type domain 2/3 and, Ig-like C2-type domain 50 and fibronectin type-III domain 2). As to expression, expressed in body wall muscles.

The protein resides in the cytoplasm. Its subcellular location is the myofibril. It localises to the sarcomere. It is found in the m line. The protein localises to the i band. The protein operates within protein modification; protein ubiquitination. Its function is as follows. Probable substrate-specific adapter of an E3 ubiquitin-protein ligase complex which mediates the ubiquitination and subsequent proteasomal degradation of target proteins. Controls degradation of microtubule severing protein mei-1 after meiosis. Controls degradation of ppfr-1, the regulatory subunit of PP4 complex, after meiosis. In body wall muscles, involved in the organization of myosin thick filaments, likely by regulating the degradation of mei-1 downstream of unc-89. May also activate the TORC1 pathway. The chain is Protein maternal effect lethal 26 (mel-26) from Caenorhabditis elegans.